We begin with the raw amino-acid sequence, 247 residues long: RNA-free ribonuclease P (247 aa).

The protein belongs to the HARP family.

The enzyme catalyses Endonucleolytic cleavage of RNA, removing 5'-extranucleotides from tRNA precursor.. RNA-free RNase P that catalyzes the removal of the 5'-leader sequence from pre-tRNA to produce the mature 5'-terminus. The chain is RNA-free ribonuclease P from Methanosarcina mazei (strain ATCC BAA-159 / DSM 3647 / Goe1 / Go1 / JCM 11833 / OCM 88) (Methanosarcina frisia).